The chain runs to 465 residues: Iron-sulfur cluster assembly SufBD family protein SAR0880 (465 aa).

It belongs to the iron-sulfur cluster assembly SufBD family.

The chain is Iron-sulfur cluster assembly SufBD family protein SAR0880 from Staphylococcus aureus (strain MRSA252).